The sequence spans 201 residues: Small ribosomal subunit protein uS4 (201 aa).

Positions 91–151 (SRLDNVVYRA…EKSQKMNWFE (61 aa)) constitute an S4 RNA-binding domain.

The protein belongs to the universal ribosomal protein uS4 family. In terms of assembly, part of the 30S ribosomal subunit. Contacts protein S5. The interaction surface between S4 and S5 is involved in control of translational fidelity.

Its function is as follows. One of the primary rRNA binding proteins, it binds directly to 16S rRNA where it nucleates assembly of the body of the 30S subunit. With S5 and S12 plays an important role in translational accuracy. The polypeptide is Small ribosomal subunit protein uS4 (Corynebacterium efficiens (strain DSM 44549 / YS-314 / AJ 12310 / JCM 11189 / NBRC 100395)).